Here is a 466-residue protein sequence, read N- to C-terminus: DNA polymerase delta subunit 3 (466 aa).

Ala2 bears the N-acetylalanine mark. 2 disordered regions span residues Pro145 to Met218 and Glu255 to Lys466. Basic and acidic residues-rich tracts occupy residues Asp205–Met218, Glu255–Glu265, and Asp281–Lys297. Residue Lys259 forms a Glycyl lysine isopeptide (Lys-Gly) (interchain with G-Cter in SUMO); alternate linkage. Lys259 is covalently cross-linked (Glycyl lysine isopeptide (Lys-Gly) (interchain with G-Cter in SUMO2); alternate). A Glycyl lysine isopeptide (Lys-Gly) (interchain with G-Cter in SUMO2) cross-link involves residue Lys262. Position 308 is a phosphoserine (Ser308). Positions Pro350–Glu360 are enriched in pro residues. Phosphoserine occurs at positions 407 and 409. Thr411 carries the post-translational modification Phosphothreonine. Ser413 bears the Phosphoserine mark. Over residues Val432–Lys441 the composition is skewed to basic and acidic residues. A Glycyl lysine isopeptide (Lys-Gly) (interchain with G-Cter in SUMO); alternate cross-link involves residue Lys433. A Glycyl lysine isopeptide (Lys-Gly) (interchain with G-Cter in SUMO2); alternate cross-link involves residue Lys433. Residues Gln456–Phe463 carry the PIP-box motif.

In terms of assembly, component of both the DNA polymerase delta and DNA polymerase zeta complexes. The tetrameric DNA polymerase delta complex (Pol-delta4), which consists of POLD1/p125, POLD2/p50, POLD3/p66/p68 and POLD4/p12, with POLD1 bearing DNA polymerase and 3' to 5' proofreading exonuclease activities. Within this complex, directly interacts with POLD2. Following stress caused by DNA damaging agents or by replication stress, POLD4 is degraded and Pol-delta4 is converted into a trimeric form of the complex (Pol-delta3), which consists of POLD1, POLD2 and POLD3. Pol-delta3 is the major form occurring at S phase replication sites, as well as DNA damage sites. Directly interacts with PCNA, as do POLD1 and POLD4; this interaction stimulates Pol-delta polymerase activity. Component of the DNA polymerase zeta complex (POLZ), which consists of REV3L, MAD2L2, POLD2 and POLD3, with REV3L bearing DNA polymerase catalytic activity. The DNA polymerase delta complex interacts with POLDIP2; this interaction is probably mediated through direct binding to POLD2. Post-translationally, ubiquitinated, but not targeted to the proteasome. Sumoylated. Sumoylation by SUMO3 may be predominant.

It is found in the cytoplasm. The protein localises to the nucleus. Functionally, accessory component of both the DNA polymerase delta complex and the DNA polymerase zeta complex. As a component of the trimeric and tetrameric DNA polymerase delta complexes (Pol-delta3 and Pol-delta4, respectively), plays a role in high fidelity genome replication, including in lagging strand synthesis, and repair. Required for optimal Pol-delta activity. Stabilizes the Pol-delta complex and plays a major role in Pol-delta stimulation by PCNA. Pol-delta3 and Pol-delta4 are characterized by the absence or the presence of POLD4. They exhibit differences in catalytic activity. Most notably, Pol-delta3 shows higher proofreading activity than Pol-delta4. Although both Pol-delta3 and Pol-delta4 process Okazaki fragments in vitro, Pol-delta3 may also be better suited to fulfill this task, exhibiting near-absence of strand displacement activity compared to Pol-delta4 and stalling on encounter with the 5'-blocking oligonucleotides. Pol-delta3 idling process may avoid the formation of a gap, while maintaining a nick that can be readily ligated. Along with DNA polymerase kappa, DNA polymerase delta carries out approximately half of nucleotide excision repair (NER) synthesis following UV irradiation. In this context, POLD3, along with PCNA and RFC1-replication factor C complex, is required to recruit POLD1, the catalytic subunit of the polymerase delta complex, to DNA damage sites. Under conditions of DNA replication stress, required for the repair of broken replication forks through break-induced replication (BIR). Involved in the translesion synthesis (TLS) of templates carrying O6-methylguanine or abasic sites performed by Pol-delta4, independently of DNA polymerase zeta (REV3L) or eta (POLH). Facilitates abasic site bypass by DNA polymerase delta by promoting extension from the nucleotide inserted opposite the lesion. Also involved in TLS, as a component of the tetrameric DNA polymerase zeta complex. Along with POLD2, dramatically increases the efficiency and processivity of DNA synthesis of the DNA polymerase zeta complex compared to the minimal zeta complex, consisting of only REV3L and REV7. The protein is DNA polymerase delta subunit 3 (POLD3) of Bos taurus (Bovine).